Consider the following 368-residue polypeptide: Protein PXR1 (368 aa).

Positions 1 to 24 (MGLAGAKNKRKLGNDPNNTKWSRN) are disordered. Residues 15 to 24 (DPNNTKWSRN) show a composition bias toward polar residues. Positions 25 to 79 (TDTFGQKILRAQGWQPGEYLGAKDAAHAEWHTEANTTHIRVTLKDDTLGLGAKRN) constitute a G-patch domain. Residues 144–337 (TPDEEAEEIP…GYSTPIPTGS (194 aa)) are disordered. The span at 176 to 186 (RRSDKEDDKLG) shows a compositional bias: basic and acidic residues. 2 stretches are compositionally biased toward basic residues: residues 187 to 196 (KKEKKSKKRK) and 257 to 277 (DKKR…KKEK). Positions 310-337 (PSSAPTPTDSNSSTPTGSGYSTPIPTGS) are enriched in low complexity.

Belongs to the PINX1 family.

It is found in the nucleus. The protein resides in the nucleolus. In terms of biological role, involved in rRNA-processing at A0, A1 and A2 sites and negatively regulates telomerase. This is Protein PXR1 (PXR1) from Chaetomium globosum (strain ATCC 6205 / CBS 148.51 / DSM 1962 / NBRC 6347 / NRRL 1970) (Soil fungus).